The following is a 191-amino-acid chain: Protein adenylyltransferase NmFic (191 aa).

In terms of domain architecture, Fido spans 37 to 162 (GTTAGLQQIH…NDLELRFLLK (126 aa)). ATP is bound by residues Lys-67, 104–107 (NIAH), 112–118 (GNGRSTR), and 140–143 (KTLY). The Inhibitory (S/T)XXXE(G/N) motif signature appears at 182 to 187 (SYYYEG). Tyr-183 carries the post-translational modification O-AMP-tyrosine; in vitro. Glu-186 contacts ATP.

As to quaternary structure, homodimer. Post-translationally, auto-AMPylation at Tyr-183 in vitro.

It carries out the reaction L-tyrosyl-[protein] + ATP = O-(5'-adenylyl)-L-tyrosyl-[protein] + diphosphate. The catalysed reaction is L-threonyl-[protein] + ATP = 3-O-(5'-adenylyl)-L-threonyl-[protein] + diphosphate. Its activity is regulated as follows. Adenylyltransferase activity is inhibited by the inhibitory helix present at the C-terminus: Glu-186 binds ATP and competes with ATP-binding at Arg-118, thereby preventing adenylyltransferase activity. Activation dissociates ATP-binding from Glu-186, allowing ordered binding of the entire ATP moiety with the alpha-phosphate in an orientation that is productive for accepting an incoming target hydroxyl side chain. Adenylyltransferase that mediates the addition of adenosine 5'-monophosphate (AMP) to specific residues of target proteins. This chain is Protein adenylyltransferase NmFic, found in Neisseria meningitidis serogroup B (strain ATCC BAA-335 / MC58).